The chain runs to 365 residues: Succinyl-diaminopimelate desuccinylase (365 aa).

Residue histidine 64 participates in Zn(2+) binding. Residue aspartate 66 is part of the active site. Aspartate 95 provides a ligand contact to Zn(2+). The active-site Proton acceptor is glutamate 125. 3 residues coordinate Zn(2+): glutamate 126, glutamate 154, and histidine 339.

The protein belongs to the peptidase M20A family. DapE subfamily. In terms of assembly, homodimer. Zn(2+) serves as cofactor. Requires Co(2+) as cofactor.

The catalysed reaction is N-succinyl-(2S,6S)-2,6-diaminopimelate + H2O = (2S,6S)-2,6-diaminopimelate + succinate. Its pathway is amino-acid biosynthesis; L-lysine biosynthesis via DAP pathway; LL-2,6-diaminopimelate from (S)-tetrahydrodipicolinate (succinylase route): step 3/3. Its function is as follows. Catalyzes the hydrolysis of N-succinyl-L,L-diaminopimelic acid (SDAP), forming succinate and LL-2,6-diaminopimelate (DAP), an intermediate involved in the bacterial biosynthesis of lysine and meso-diaminopimelic acid, an essential component of bacterial cell walls. This chain is Succinyl-diaminopimelate desuccinylase, found in Campylobacter fetus subsp. fetus (strain 82-40).